The sequence spans 124 residues: Snake venom vascular endothelial growth factor toxin apiscin (124 aa).

The signal sequence occupies residues 1-24 (MAAYLLAVAILFCIQGWPSGTVQG). Q25 is modified (pyrrolidone carboxylic acid). 3 disulfide bridges follow: C38/C80, C69/C115, and C73/C117.

It belongs to the PDGF/VEGF growth factor family. Snake venom VEGF subfamily. In terms of assembly, homodimer; disulfide-linked. Interacts with VEGF receptor-1 (FLT1) with a high affinity, whereas it binds to VEGF receptor-2 (KDR) with a low affinity. Does not bind VEGF receptor-3 (FLT4). As to expression, expressed by the venom gland.

Its subcellular location is the secreted. Its function is as follows. Snake venom VEGFs that may contribute to venom dispersion and prey subjugation by inducing vascular permeability and hypotension. This protein induces an increase in capillary permeability after intradermal injection, as well as a drastic hypotensive effect after intravenous injection. The hypotension is mediated by nitric oxide (NO), which is produced by VEGF-activated endothelium NO synthase. Also induces angiogenesis in vitro. Like other crotalid VEGFs, this protein interacts with VEGF receptor-1 (FLT1) with a high affinity, whereas it binds to VEGF receptor-2 (KDR) with a low affinity. The protein is Snake venom vascular endothelial growth factor toxin apiscin of Agkistrodon piscivorus piscivorus (Eastern cottonmouth).